The following is a 351-amino-acid chain: Probable dual-specificity RNA methyltransferase RlmN (351 aa).

The active-site Proton acceptor is the glutamate 102. Residues 110–339 form the Radical SAM core domain; that stretch reads DGGRKTICIS…ILNRRSPGKD (230 aa). Residues cysteine 117 and cysteine 344 are joined by a disulfide bond. 3 residues coordinate [4Fe-4S] cluster: cysteine 124, cysteine 128, and cysteine 131. Residues 171–172, serine 203, 226–228, and asparagine 302 each bind S-adenosyl-L-methionine; these read GE and SLN. The S-methylcysteine intermediate role is filled by cysteine 344.

It belongs to the radical SAM superfamily. RlmN family. [4Fe-4S] cluster is required as a cofactor.

The protein localises to the cytoplasm. The catalysed reaction is adenosine(2503) in 23S rRNA + 2 reduced [2Fe-2S]-[ferredoxin] + 2 S-adenosyl-L-methionine = 2-methyladenosine(2503) in 23S rRNA + 5'-deoxyadenosine + L-methionine + 2 oxidized [2Fe-2S]-[ferredoxin] + S-adenosyl-L-homocysteine. The enzyme catalyses adenosine(37) in tRNA + 2 reduced [2Fe-2S]-[ferredoxin] + 2 S-adenosyl-L-methionine = 2-methyladenosine(37) in tRNA + 5'-deoxyadenosine + L-methionine + 2 oxidized [2Fe-2S]-[ferredoxin] + S-adenosyl-L-homocysteine. In terms of biological role, specifically methylates position 2 of adenine 2503 in 23S rRNA and position 2 of adenine 37 in tRNAs. The sequence is that of Probable dual-specificity RNA methyltransferase RlmN from Leptospira borgpetersenii serovar Hardjo-bovis (strain JB197).